Here is a 335-residue protein sequence, read N- to C-terminus: Glyceraldehyde-3-phosphate dehydrogenase (335 aa).

Residues 15-16 and Asp37 contribute to the NAD(+) site; that span reads RI. D-glyceraldehyde 3-phosphate contacts are provided by residues 155 to 157, Thr186, Arg201, 214 to 215, and Arg237; these read SCT and TG. Catalysis depends on Cys156, which acts as the Nucleophile. Gln301 and Asn318 together coordinate NAD(+).

Belongs to the glyceraldehyde-3-phosphate dehydrogenase family. In terms of assembly, homotetramer.

It is found in the cytoplasm. It carries out the reaction D-glyceraldehyde 3-phosphate + phosphate + NADP(+) = (2R)-3-phospho-glyceroyl phosphate + NADPH + H(+). The catalysed reaction is D-glyceraldehyde 3-phosphate + phosphate + NAD(+) = (2R)-3-phospho-glyceroyl phosphate + NADH + H(+). It participates in carbohydrate degradation; glycolysis; pyruvate from D-glyceraldehyde 3-phosphate: step 1/5. This is Glyceraldehyde-3-phosphate dehydrogenase (gap) from Haloarcula vallismortis (Halobacterium vallismortis).